Reading from the N-terminus, the 345-residue chain is HTH-type transcriptional regulator reg1 (345 aa).

An HTH lacI-type domain is found at 1-58 (MTTRLADIAAQAGVSEATVSRVLNGKPGVAATTRQSVLAALDVLGYERPVRLRRRSAG). The segment at residues 5–24 (LADIAAQAGVSEATVSRVLN) is a DNA-binding region (H-T-H motif).

Transcription repressor involved in control of expression of alpha-amylase and chitinase genes and of actinorhodin production. The polypeptide is HTH-type transcriptional regulator reg1 (reg1) (Streptomyces lividans).